Consider the following 345-residue polypeptide: Small ribosomal subunit biogenesis GTPase RsgA (345 aa).

Positions 1–36 (MSKNKLSKGQERRVQANHQRRLQQRERGAAHWDDQP) are disordered. Positions 23 to 34 (QQRERGAAHWDD) are enriched in basic and acidic residues. One can recognise a CP-type G domain in the interval 103–273 (RSVLTRPDVY…LIDSPGVREL (171 aa)). Residues 159-162 (NKID) and 213-221 (GQSGVGKSS) each bind GTP. Zn(2+) contacts are provided by Cys-297, Cys-302, His-304, and Cys-310.

This sequence belongs to the TRAFAC class YlqF/YawG GTPase family. RsgA subfamily. As to quaternary structure, monomer. Associates with 30S ribosomal subunit, binds 16S rRNA. Zn(2+) serves as cofactor.

It is found in the cytoplasm. Functionally, one of several proteins that assist in the late maturation steps of the functional core of the 30S ribosomal subunit. Helps release RbfA from mature subunits. May play a role in the assembly of ribosomal proteins into the subunit. Circularly permuted GTPase that catalyzes slow GTP hydrolysis, GTPase activity is stimulated by the 30S ribosomal subunit. This chain is Small ribosomal subunit biogenesis GTPase RsgA, found in Sodalis glossinidius (strain morsitans).